The primary structure comprises 320 residues: o-succinylbenzoate synthase (320 aa).

Residue lysine 133 is the Proton donor of the active site. The Mg(2+) site is built by aspartate 161, glutamate 190, and aspartate 213. The Proton acceptor role is filled by lysine 235.

This sequence belongs to the mandelate racemase/muconate lactonizing enzyme family. MenC type 1 subfamily. It depends on a divalent metal cation as a cofactor.

It carries out the reaction (1R,6R)-6-hydroxy-2-succinyl-cyclohexa-2,4-diene-1-carboxylate = 2-succinylbenzoate + H2O. The protein operates within quinol/quinone metabolism; 1,4-dihydroxy-2-naphthoate biosynthesis; 1,4-dihydroxy-2-naphthoate from chorismate: step 4/7. Its pathway is quinol/quinone metabolism; menaquinone biosynthesis. Its function is as follows. Converts 2-succinyl-6-hydroxy-2,4-cyclohexadiene-1-carboxylate (SHCHC) to 2-succinylbenzoate (OSB). The chain is o-succinylbenzoate synthase from Escherichia coli O127:H6 (strain E2348/69 / EPEC).